We begin with the raw amino-acid sequence, 460 residues long: ATP synthase subunit beta (460 aa).

Residue 150 to 157 (GGAGVGKT) coordinates ATP.

The protein belongs to the ATPase alpha/beta chains family. As to quaternary structure, F-type ATPases have 2 components, CF(1) - the catalytic core - and CF(0) - the membrane proton channel. CF(1) has five subunits: alpha(3), beta(3), gamma(1), delta(1), epsilon(1). CF(0) has three main subunits: a(1), b(2) and c(9-12). The alpha and beta chains form an alternating ring which encloses part of the gamma chain. CF(1) is attached to CF(0) by a central stalk formed by the gamma and epsilon chains, while a peripheral stalk is formed by the delta and b chains.

The protein resides in the cell inner membrane. It carries out the reaction ATP + H2O + 4 H(+)(in) = ADP + phosphate + 5 H(+)(out). Produces ATP from ADP in the presence of a proton gradient across the membrane. The catalytic sites are hosted primarily by the beta subunits. This is ATP synthase subunit beta from Proteus mirabilis (strain HI4320).